The following is an 865-amino-acid chain: Alanine--tRNA ligase (865 aa).

H554, H558, C656, and H660 together coordinate Zn(2+).

The protein belongs to the class-II aminoacyl-tRNA synthetase family. It depends on Zn(2+) as a cofactor.

It localises to the cytoplasm. The enzyme catalyses tRNA(Ala) + L-alanine + ATP = L-alanyl-tRNA(Ala) + AMP + diphosphate. Functionally, catalyzes the attachment of alanine to tRNA(Ala) in a two-step reaction: alanine is first activated by ATP to form Ala-AMP and then transferred to the acceptor end of tRNA(Ala). Also edits incorrectly charged Ser-tRNA(Ala) and Gly-tRNA(Ala) via its editing domain. The protein is Alanine--tRNA ligase of Francisella philomiragia subsp. philomiragia (strain ATCC 25017 / CCUG 19701 / FSC 153 / O#319-036).